The primary structure comprises 211 residues: Protein-methionine-sulfoxide reductase heme-binding subunit MsrQ (211 aa).

Helical transmembrane passes span 10 to 30, 82 to 102, 116 to 136, and 153 to 173; these read WLKVCLHLAGLLPFLWLVWAI, LWCFAWATLHLTSYALLELGV, PYLTLGIISWVILLALAFTST, and FVYLVAILAPIHYLWSVKIIS.

This sequence belongs to the MsrQ family. In terms of assembly, heterodimer of a catalytic subunit (MsrP) and a heme-binding subunit (MsrQ). Requires FMN as cofactor. Heme b is required as a cofactor.

It is found in the cell inner membrane. In terms of biological role, part of the MsrPQ system that repairs oxidized periplasmic proteins containing methionine sulfoxide residues (Met-O), using respiratory chain electrons. Thus protects these proteins from oxidative-stress damage caused by reactive species of oxygen and chlorine generated by the host defense mechanisms. MsrPQ is essential for the maintenance of envelope integrity under bleach stress, rescuing a wide series of structurally unrelated periplasmic proteins from methionine oxidation, including the primary periplasmic chaperone SurA and the lipoprotein Pal. MsrQ provides electrons for reduction to the reductase catalytic subunit MsrP, using the quinone pool of the respiratory chain. This Shigella dysenteriae serotype 1 (strain Sd197) protein is Protein-methionine-sulfoxide reductase heme-binding subunit MsrQ.